Consider the following 347-residue polypeptide: HTH-type transcriptional regulator PhcA (347 aa).

The HTH lysR-type domain occupies 1–61 (MVNVDTKLLV…IRVPHGLTPT (61 aa)). Residues 21-40 (ATYVAEKMHMTAPAVSHSLG) constitute a DNA-binding region (H-T-H motif). The disordered stretch occupies residues 316–347 (PMHPPMLTDDSGKSGKTGKGDAEKEDESRLSV). Residues 325–347 (DSGKSGKTGKGDAEKEDESRLSV) are compositionally biased toward basic and acidic residues.

Belongs to the LysR transcriptional regulatory family.

Its function is as follows. Regulates the transcription of one or more of the genes involved in virulence. This is HTH-type transcriptional regulator PhcA (phcA) from Ralstonia nicotianae (strain ATCC BAA-1114 / GMI1000) (Ralstonia solanacearum).